The following is a 363-amino-acid chain: L-serine dehydratase/L-threonine deaminase (363 aa).

Position 2 is an N-acetylalanine (A2). Position 41 is an N6-(pyridoxal phosphate)lysine (K41). The interval 74 to 98 (RGRSHSGDEQPHVRSQALLPDTPSP) is disordered. A pyridoxal 5'-phosphate-binding site is contributed by P164.

Belongs to the serine/threonine dehydratase family. Homodimer. It depends on pyridoxal 5'-phosphate as a cofactor. Predominantly expressed in the periportal regions of the liver.

The protein localises to the cytoplasm. It carries out the reaction L-serine = pyruvate + NH4(+). The catalysed reaction is L-threonine = 2-oxobutanoate + NH4(+). It participates in carbohydrate biosynthesis; gluconeogenesis. Catalyzes the pyridoxal-phosphate-dependent dehydrative deamination of L-threonine and L-serine to ammonia and alpha-ketobutyrate and pyruvate, respectively. In Rattus norvegicus (Rat), this protein is L-serine dehydratase/L-threonine deaminase (Sds).